We begin with the raw amino-acid sequence, 270 residues long: Formamidopyrimidine-DNA glycosylase (270 aa).

Catalysis depends on proline 2, which acts as the Schiff-base intermediate with DNA. The active-site Proton donor is glutamate 3. Catalysis depends on lysine 58, which acts as the Proton donor; for beta-elimination activity. 3 residues coordinate DNA: histidine 90, arginine 109, and arginine 152. The segment at 237–270 adopts an FPG-type zinc-finger fold; the sequence is RVYGREGEPCQCGGVVKRIVQGGRSTFFCPRCQK. The Proton donor; for delta-elimination activity role is filled by arginine 260.

It belongs to the FPG family. In terms of assembly, monomer. Zn(2+) serves as cofactor.

The enzyme catalyses Hydrolysis of DNA containing ring-opened 7-methylguanine residues, releasing 2,6-diamino-4-hydroxy-5-(N-methyl)formamidopyrimidine.. The catalysed reaction is 2'-deoxyribonucleotide-(2'-deoxyribose 5'-phosphate)-2'-deoxyribonucleotide-DNA = a 3'-end 2'-deoxyribonucleotide-(2,3-dehydro-2,3-deoxyribose 5'-phosphate)-DNA + a 5'-end 5'-phospho-2'-deoxyribonucleoside-DNA + H(+). Functionally, involved in base excision repair of DNA damaged by oxidation or by mutagenic agents. Acts as a DNA glycosylase that recognizes and removes damaged bases. Has a preference for oxidized purines, such as 7,8-dihydro-8-oxoguanine (8-oxoG). Has AP (apurinic/apyrimidinic) lyase activity and introduces nicks in the DNA strand. Cleaves the DNA backbone by beta-delta elimination to generate a single-strand break at the site of the removed base with both 3'- and 5'-phosphates. The protein is Formamidopyrimidine-DNA glycosylase of Novosphingobium aromaticivorans (strain ATCC 700278 / DSM 12444 / CCUG 56034 / CIP 105152 / NBRC 16084 / F199).